The primary structure comprises 163 residues: Urease accessory protein UreE (163 aa).

Belongs to the UreE family.

It localises to the cytoplasm. In terms of biological role, involved in urease metallocenter assembly. Binds nickel. Probably functions as a nickel donor during metallocenter assembly. This is Urease accessory protein UreE from Actinomyces naeslundii.